Consider the following 149-residue polypeptide: 4-hydroxyphenylacetate 3-monooxygenase, reductase component (149 aa).

27–34 (ERGMTATA) contributes to the FAD binding site. Residue serine 37 participates in NAD(+) binding. Residues 48-50 (AVS), 54-55 (KL), and histidine 80 each bind FAD. NAD(+) is bound by residues histidine 116 and 137–140 (YFQR).

Belongs to the non-flavoprotein flavin reductase family. HpaC subfamily. In terms of assembly, homodimer. 4-HPA 3-monooxygenase consists of a reductase component HpaC and an oxygenase component HpaB.

It catalyses the reaction a reduced flavin + NAD(+) = an oxidized flavin + NADH + 2 H(+). It functions in the pathway aromatic compound metabolism; 4-hydroxyphenylacetate degradation; pyruvate and succinate semialdehyde from 4-hydroxyphenylacetate: step 1/7. Catalyzes the reduction of free flavins (FMN, FAD and riboflavin) by NADH. Subsequently, the reduced flavins diffuse to the large HpaB component. It utilizes NADH, but not NADPH as an electron donor, and both FAD and FMN as electron acceptors. The polypeptide is 4-hydroxyphenylacetate 3-monooxygenase, reductase component (Thermus thermophilus (strain ATCC 27634 / DSM 579 / HB8)).